Consider the following 147-residue polypeptide: Histone H2B (147 aa).

Residues 1–31 (MAPKAEKKPAEKKPAEEKKAVAEKAPAEKKP) are compositionally biased toward basic and acidic residues. The disordered stretch occupies residues 1–55 (MAPKAEKKPAEKKPAEEKKAVAEKAPAEKKPKAGKKLPKEGGAAAGDKKKKRVKK). Lys7, Lys35, and Lys36 each carry N6-acetyllysine. Lys143 participates in a covalent cross-link: Glycyl lysine isopeptide (Lys-Gly) (interchain with G-Cter in ubiquitin).

Belongs to the histone H2B family. As to quaternary structure, the nucleosome is a histone octamer containing two molecules each of H2A, H2B, H3 and H4 assembled in one H3-H4 heterotetramer and two H2A-H2B heterodimers. The octamer wraps approximately 147 bp of DNA. Can be acetylated to form H2BK6ac, H2BK33ac and H2BK34ac. Post-translationally, monoubiquitinated to form H2BK143ub1; may give a specific tag for epigenetic transcriptional activation.

The protein localises to the nucleus. It is found in the chromosome. Functionally, core component of nucleosome. Nucleosomes wrap and compact DNA into chromatin, limiting DNA accessibility to the cellular machineries which require DNA as a template. Histones thereby play a central role in transcription regulation, DNA repair, DNA replication and chromosomal stability. DNA accessibility is regulated via a complex set of post-translational modifications of histones, also called histone code, and nucleosome remodeling. This Gossypium hirsutum (Upland cotton) protein is Histone H2B (HIS2B).